The following is a 205-amino-acid chain: Putative 3-methyladenine DNA glycosylase (205 aa).

This sequence belongs to the DNA glycosylase MPG family.

This is Putative 3-methyladenine DNA glycosylase from Bacillus cereus (strain B4264).